Consider the following 122-residue polypeptide: Pollen allergen Phl p 2 (122 aa).

The signal sequence occupies residues 1–26; that stretch reads MSMASSSSSSLLAMAVLAALFAGAWC. An Expansin-like CBD domain is found at 41–120; the sequence is KHLAVLVKYE…KYTIGATYAP (80 aa).

Belongs to the expansin family. Expansin B subfamily. As to expression, pollen specific.

The protein localises to the secreted. The polypeptide is Pollen allergen Phl p 2 (PHLPII) (Phleum pratense (Common timothy)).